The primary structure comprises 338 residues: Methionine import ATP-binding protein MetN 1 (338 aa).

An ABC transporter domain is found at 2-241 (IQLENIEKHY…PNEKLTKDFI (240 aa)). 38 to 45 (GYSGAGKS) contacts ATP.

Belongs to the ABC transporter superfamily. Methionine importer (TC 3.A.1.24) family. In terms of assembly, the complex is composed of two ATP-binding proteins (MetN), two transmembrane proteins (MetI) and a solute-binding protein (MetQ).

It is found in the cell membrane. It catalyses the reaction L-methionine(out) + ATP + H2O = L-methionine(in) + ADP + phosphate + H(+). The enzyme catalyses D-methionine(out) + ATP + H2O = D-methionine(in) + ADP + phosphate + H(+). Its function is as follows. Part of the ABC transporter complex MetNIQ involved in methionine import. Responsible for energy coupling to the transport system. The chain is Methionine import ATP-binding protein MetN 1 from Oceanobacillus iheyensis (strain DSM 14371 / CIP 107618 / JCM 11309 / KCTC 3954 / HTE831).